A 120-amino-acid chain; its full sequence is MITKTSKNATRLKRHARVRAKLSGTAERPRLNVFRSNKNIYAQVIDDVNGVTLVSASTLDKDLKIENSSDAAAATKVGELVAKRAVEKGISNVVFDRGGYLYHGRVKALAEAAREAGLKF.

Belongs to the universal ribosomal protein uL18 family. Part of the 50S ribosomal subunit; part of the 5S rRNA/L5/L18/L25 subcomplex. Contacts the 5S and 23S rRNAs.

In terms of biological role, this is one of the proteins that bind and probably mediate the attachment of the 5S RNA into the large ribosomal subunit, where it forms part of the central protuberance. The polypeptide is Large ribosomal subunit protein uL18 (Bacillus pumilus (strain SAFR-032)).